Consider the following 205-residue polypeptide: Cytochrome c oxidase subunit 3 (205 aa).

Helical transmembrane passes span 29–49 (TIVF…MYFV), 72–92 (ALLI…GVFA), 104–124 (WFLV…YEYI), 142–162 (FFIT…AFVV), and 184–204 (SYYW…IYFI).

As to quaternary structure, associates with subunits I, II and IV to form cytochrome c oxidase. The 4 subunit cytochrome c oxidase forms a supercomplex with the menaquinol-cytochrome c reductase complex (cytochrome bc1).

It is found in the cell membrane. The catalysed reaction is 4 Fe(II)-[cytochrome c] + O2 + 8 H(+)(in) = 4 Fe(III)-[cytochrome c] + 2 H2O + 4 H(+)(out). The polypeptide is Cytochrome c oxidase subunit 3 (ctaE) (Corynebacterium glutamicum (strain ATCC 13032 / DSM 20300 / JCM 1318 / BCRC 11384 / CCUG 27702 / LMG 3730 / NBRC 12168 / NCIMB 10025 / NRRL B-2784 / 534)).